Here is an 830-residue protein sequence, read N- to C-terminus: Formin-like protein 14 (830 aa).

A signal peptide spans 1 to 34; that stretch reads MAMAMAMPSSSPPLFFSLLNLMLLLLLLAPYCSA. Residues 40–59 show a composition bias toward polar residues; the sequence is NNTHHRSSSPTQTTLQQLHS. Residues 40 to 195 are disordered; that stretch reads NNTHHRSSSP…NISTLVHPTQ (156 aa). Pro residues-rich tracts occupy residues 61 to 86 and 95 to 135; these read DSPPPPPLPTPTVTTPTPPPPPPAPR and PPPP…PTPK. Residues 149–160 are compositionally biased toward low complexity; the sequence is YPFTNYPFFPNF. Residues 203-223 form a helical membrane-spanning segment; that stretch reads VLQALLLSFLSLCLLLLSALL. The tract at residues 235–446 is disordered; the sequence is HHSHSHPNAR…LHSDKLKPGS (212 aa). Positions 314-323 are enriched in pro residues; sequence RPLPPLPRVG. Positions 324 to 369 are enriched in low complexity; sequence PPSGEFASRSSASDPSTAPPAAAEASSSSLSPSSPSASSPTLGSSP. In terms of domain architecture, FH2 spans 390-823; sequence PKRRPQPPEP…MMGRDWNMAA (434 aa). The segment covering 424–446 has biased composition (basic and acidic residues); sequence HSPSEKSMRKSRPLHSDKLKPGS.

This sequence belongs to the formin-like family. Class-I subfamily.

The protein localises to the membrane. The chain is Formin-like protein 14 (FH14) from Oryza sativa subsp. japonica (Rice).